The sequence spans 285 residues: Short chain dehydrogenase sol3 (285 aa).

3 residues coordinate NADP(+): L39, K64, and D87. Residues S168 and Y200 each act as proton donor in the active site. Residues Y200, K204, and S234 each contribute to the NADP(+) site. K204 acts as the Lowers pKa of active site Tyr in catalysis.

The protein belongs to the short-chain dehydrogenases/reductases (SDR) family.

The protein operates within phytotoxin biosynthesis. Its function is as follows. Short chain dehydrogenase; part of the gene cluster that mediates the biosynthesis of the phytotoxin solanapyrone, a causal agent of early blight disease of potato and tomato. The prosolanapyrone synthase sol1 is a polyketide synthase that produces the octaketide desmethylprosolanapyrone I via sequential condensations of 7 malonyl-CoA units with one acetyl-CoA unit, and one methylation step. The octaketide backbone is further methylated by the sol2 O-methyltransferase to yield prosolanapyrone I. Prosolanapyrone I is hydroxylated to prosolanapyrone II by the cytochrome P450 monooxygenase sol6. The solanapyrone synthase sol5 then catalyzes the oxidation of prosolanapyrone II and the subsequent Diels Alder cycloisomerization of the product prosolanapyrone III to solanapyrones A and D. Solanapyrones A and D are then converted into solanapyrones B and E, respectively, by the sol3 dehydrogenase. This is Short chain dehydrogenase sol3 (sol3) from Alternaria solani.